The sequence spans 130 residues: MSKISRKSRLRKGKRGVQKGIIHIQAGFNNTIITVTDVRGQVILWSSAGACGFKGTRRSTPFAAQAAAENAVRASMDRGLKQAEVMISGPGPGRDTALRAIRRSGVTLSFVRDVTPMPHNGCRPPKKRRV.

The protein belongs to the universal ribosomal protein uS11 family. In terms of assembly, part of the 30S ribosomal subunit.

It localises to the plastid. Its subcellular location is the chloroplast. The sequence is that of Small ribosomal subunit protein uS11c from Marsilea quadrifolia (European water clover).